The chain runs to 6629 residues: Replicase polyprotein 1ab (6629 aa).

Over 1 to 1750 the chain is Cytoplasmic; the sequence is MASSLKQGVS…VASYKTVLCK (1750 aa). In terms of domain architecture, Ubiquitin-like 1 spans 675–780; it reads KTVTFGETTV…SCHLIYRDYE (106 aa). A disordered region spans residues 783–802; the sequence is DDIEEEDAEECDTDSGEAEE. The Macro domain occupies 1003-1179; sequence VKPATCEKPK…YFDVTCKQKT (177 aa). The Ubiquitin-like 2 domain occupies 1175 to 1227; the sequence is CKQKTIYLTEDGVKYRSIVLKPGDSLGQFGQVYAKNKIVFTADDVEDKEILYV. Residues 1236 to 1497 form the Peptidase C16 domain; that stretch reads EYYGLDAQKY…SKSVKEDVSN (262 aa). C1274 functions as the For PL-PRO activity in the catalytic mechanism. Residues C1353, C1355, C1387, and C1390 each contribute to the Zn(2+) site. The segment at 1353–1390 adopts a C4-type; degenerate zinc-finger fold; sequence CNCGIKSYELRGLEACIQPVRATNLLHFKTQYSNCPTC. Residues H1437 and D1448 each act as for PL-PRO activity in the active site. The helical transmembrane segment at 1751 to 1771 threads the bilayer; sequence VVLATLLIVWFVYTSNPVMFT. Positions 1751–1864 are HD1; sequence VVLATLLIVW…KPVAGFVIIC (114 aa). The region spanning 1769–1833 is the 3Ecto domain; sequence MFTGIRVLDF…AYSVEQVYKD (65 aa). Over 1772-1843 the chain is Lumenal; the sequence is GIRVLDFLFE…AASGFIFNWN (72 aa). 2 disulfide bridges follow: C1785–C1811 and C1802–C1808. Residues 1844–1864 traverse the membrane as a helical segment; it reads WLYLVFLILFVKPVAGFVIIC. Topologically, residues 1865–2280 are cytoplasmic; it reads YCVKYLVLNS…TFKCFKSYFK (416 aa). A Y1 region spans residues 1911–2001; sequence YIQVHHILYC…KLKRHVKPTA (91 aa). The CoV Nsp3 Y domain occupies 1911-2263; it reads YIQVHHILYC…HTQKLLVEKK (353 aa). The Zn(2+) site is built by H1915, C1920, C1925, C1928, C1961, H1964, C1968, and C1971. The interval 1915 to 1928 is ZF1; the sequence is HHILYCKDVTCEVC. Residues 1961-1971 are ZF2; that stretch reads CKRHNWYCRNC. Residues 2002-2104 form a Y2 region; sequence YAYHVVDEAC…ILDQALYEQL (103 aa). Residues 2002–2263 are coV-Y; it reads YAYHVVDEAC…HTQKLLVEKK (262 aa). The interval 2105–2163 is Y3; it reads VVEPVSKSVIDKVCSILSSIISVDTAALNYKAGTLRDALLSITKDEEAVDMAIFCHNHD. The segment at 2164–2263 is Y4; that stretch reads VDYTGDGFTN…HTQKLLVEKK (100 aa). Residues 2281 to 2301 form a helical membrane-spanning segment; sequence WLLIFYILFTACCSGYYYMEV. The segment at 2281–2664 is HD2; it reads WLLIFYILFT…LACCYLGFII (384 aa). Residues 2302 to 2559 lie on the Lumenal side of the membrane; sequence SKSFVHPMYD…FFTGVNPNIY (258 aa). The helical transmembrane segment at 2560 to 2580 threads the bilayer; sequence MQLATMFLILVVVVLIFAMVI. At 2581 to 2611 the chain is on the cytoplasmic side; that stretch reads KFQGVFKAYATTVFITMLVWVINAFILCVHS. The helical transmembrane segment at 2612–2632 threads the bilayer; sequence YNSVLAVILLVLYCYASLVTS. The Lumenal portion of the chain corresponds to 2633 to 2643; it reads RNTVIIMHCWL. Residues 2644 to 2664 traverse the membrane as a helical segment; it reads VFTFGLIVPTWLACCYLGFII. The Cytoplasmic portion of the chain corresponds to 2665 to 3096; it reads YMYTPLFLWC…SSFVRKATSW (432 aa). Residues 2684-2779 enclose the Nsp4C domain; the sequence is LYDGNEFVGN…RYSIGVSRLQ (96 aa). In terms of domain architecture, Peptidase C30 spans 2780 to 3086; it reads SGFKKLVSPS…FNQIGGVRLQ (307 aa). Catalysis depends on for 3CL-PRO activity residues H2820 and C2922. A helical membrane pass occupies residues 3097-3117; sequence FWSRCVLACFLFVLCAIVLFT. Residues 3097-3317 form an HD3 region; sequence FWSRCVLACF…WLCTCYFGLY (221 aa). Over 3118 to 3121 the chain is Lumenal; it reads AVPL. The helical transmembrane segment at 3122-3142 threads the bilayer; that stretch reads KFYVYAAVILLMAVLFISFTV. The Cytoplasmic portion of the chain corresponds to 3143-3151; the sequence is KHVMAYMDT. A helical membrane pass occupies residues 3152 to 3172; that stretch reads FLLPTLITVIIGVCAEVPFIY. Residues 3173–3188 are Lumenal-facing; that stretch reads NTLISQVVIFLSQWYD. A helical transmembrane segment spans residues 3189-3209; sequence PVVFDTMVPWMFLPLVLYTAF. Over 3210–3257 the chain is Cytoplasmic; sequence KCVQGCYMNSFNTSLLMLYQFVKLGFVIYTSSNTLTAYTEGNWELFFE. The helical transmembrane segment at 3258 to 3278 threads the bilayer; sequence LVHTTVLANVSSNSLIGLFVF. Residues 3279–3296 lie on the Lumenal side of the membrane; the sequence is KCAKWMLYYCNATYLNNY. The chain crosses the membrane as a helical span at residues 3297–3317; that stretch reads VLMAVMVNCIGWLCTCYFGLY. The Cytoplasmic segment spans residues 3318–6629; it reads WWVNKVFGLT…FTSDSFVCTM (3312 aa). Residues 3380 to 3462 form the RdRp Nsp7 cofactor domain; the sequence is AKLSDVKCTT…DILKRSTVLQ (83 aa). The RdRp Nsp8 cofactor domain maps to 3463–3672; the sequence is SVTQEFSHIP…GHNKVDVVLQ (210 aa). The Nsp9 ssRNA-binding domain maps to 3673 to 3783; it reads NNELMPHGVK…GAISNVVVLQ (111 aa). One can recognise an ExoN/MTase coactivator domain in the interval 3785-3926; the sequence is KGHETEEVDA…CDSLRQPKSS (142 aa). The Zn(2+) site is built by C3858, C3861, H3867, C3878, C3904, C3907, C3915, and C3917. Zinc fingers lie at residues 3858 to 3878 and 3904 to 3917; these read CLYCRAHIAHPGSVGNLDGRC and CTVCQCWIGYGCQC. Residues 3940-4198 enclose the NiRAN domain; the sequence is YLNRVRGSSE…APERYFEYDV (259 aa). One can recognise a Nsp12 Interface domain in the interval 4203–4301; that stretch reads KSYDLLKYDY…MNQDNTMSFS (99 aa). Residues H4232, C4238, C4243, C4247, and C4424 each coordinate Zn(2+). Residues 4302 to 4868 form the Nsp12 RNA-dependent RNA polymerase domain; it reads KMGLSQLMQF…NMYRAPTTLQ (567 aa). Residues 4304–4517 form a rdRp Fingers N-ter region; sequence GLSQLMQFVG…HQKILKSIVN (214 aa). The tract at residues 4518–4556 is rdRp Palm N-ter; sequence TRNASVVIGTTKFYGGWDNMLRNLIQGVEDPILMGWDYP. Residues 4548-4710 form the RdRp catalytic domain; sequence PILMGWDYPK…CYNNTLAKQG (163 aa). A rdRp Fingers C-ter region spans residues 4557–4615; it reads KCDRAMPNLLRIAASLVLARKHTNCCSWSERIYRLYNECAQVLSETVLATGGIYVKPGG. Residues H4578, C4581, and C4582 each contribute to the Zn(2+) site. Residues 4616 to 4751 are rdRp Palm C-ter; it reads TSSGDATTAY…EKGPHEFCSQ (136 aa). Active-site residues include S4695, D4696, and D4697. The interval 4752 to 4868 is rdRp Thumb; that stretch reads HTMLVEVDGE…NMYRAPTTLQ (117 aa). A CV ZBD domain is found at 4869 to 4981; the sequence is SCGVCVVCNS…DDFNQLATTN (113 aa). Positions 4873, 4876, 4884, 4887, 4894, 4897, 4901, 4907, 4918, 4923, 4940, and 4943 each coordinate Zn(2+). In terms of domain architecture, (+)RNA virus helicase ATP-binding spans 5125–5305; that stretch reads MVPECFVNNI…MVCVKPDIFL (181 aa). Residue 5150-5157 coordinates ATP; it reads GPPGSGKS. One can recognise a (+)RNA virus helicase C-terminal domain in the interval 5306–5477; that stretch reads AKCYRCPKEI…QGTGLFKICN (172 aa). The 215-residue stretch at 5539 to 5753 folds into the ExoN domain; that stretch reads MFITRDEAIR…RCLAINNAFC (215 aa). Catalysis depends on residues D5557, E5559, and E5658. Residues C5674, C5676, C5692, H5695, H5723, C5727, and H5730 each coordinate Zn(2+). Catalysis depends on residues H5734 and D5739. Zn(2+) is bound at residue C5745. One can recognise an N7-MTase domain in the interval 5762 to 5989; that stretch reads YPHIANEDEV…NLWKSFSALQ (228 aa). An S-adenosyl-L-methionine-binding site is contributed by 5797-5803; that stretch reads DIGNPKG. The segment at 5877 to 5891 is gpppA-binding; that stretch reads CNGGSLYVNKHAFYT. Residues C5915, C5935, C5946, and H5949 each contribute to the Zn(2+) site. In terms of domain architecture, Nsp15 N-terminal oligomerization spans 5990 to 6050; sequence SIDNIAYNMY…SVAFELYAKR (61 aa). In terms of domain architecture, AV-Nsp11N/CoV-Nsp15M spans 6051 to 6166; sequence NIRTLPNNRI…VYKRVNGAFV (116 aa). Positions 6183–6324 constitute a NendoU domain; that stretch reads EPRSDIERDF…EDGSIKTCYP (142 aa). Active-site residues include H6212, H6227, K6267, K6371, D6455, K6499, and E6532. One can recognise a Nidovirus-type SAM-dependent 2'-O-MTase domain in the interval 6327-6626; sequence QSAWTCGYNM…NTSFTSDSFV (300 aa).

It belongs to the coronaviruses polyprotein 1ab family. Interacts with host PHB and PHB2. As to quaternary structure, interacts with papain-like protease and non-structural protein 6. In terms of assembly, monomer. Homodimer. Only the homodimer shows catalytic activity. Eight copies of nsp7 and eight copies of nsp8 assemble to form a heterohexadecamer dsRNA-encircling ring structure. As to quaternary structure, eight copies of nsp7 and eight copies of nsp8 assemble to form a heterohexadecamer dsRNA-encircling ring structure. Interacts with ORF6 protein. In terms of assembly, homodimer. Homododecamer. Interacts with proofreading exoribonuclease nsp14 and 2'-O-methyltransferase nsp16; these interactions enhance nsp14 and nsp16 enzymatic activities. As to quaternary structure, interacts with host DDX1 (via C-terminus). Interacts with non-structural protein 10. In terms of assembly, homohexamer. Interacts with non-structural protein 10. The cofactor is Mn(2+). It depends on Zn(2+) as a cofactor. Specific enzymatic cleavages in vivo by its own proteases yield mature proteins. 3C-like proteinase nsp5 liberates nsps 6-16 from the polyprotein. Papain-like and 3C-like proteinases are autocatalytically processed. In terms of processing, N-glycosylated.

Its subcellular location is the host endoplasmic reticulum membrane. It is found in the host cytoplasm. It localises to the host perinuclear region. The protein resides in the host endoplasmic reticulum. The protein localises to the host endoplasmic reticulum-Golgi intermediate compartment. It carries out the reaction Thiol-dependent hydrolysis of ester, thioester, amide, peptide and isopeptide bonds formed by the C-terminal Gly of ubiquitin (a 76-residue protein attached to proteins as an intracellular targeting signal).. The catalysed reaction is RNA(n) + a ribonucleoside 5'-triphosphate = RNA(n+1) + diphosphate. The enzyme catalyses ATP + H2O = ADP + phosphate + H(+). It catalyses the reaction uridylyl-uridylyl-ribonucleotide-RNA = a 3'-end uridylyl-2',3'-cyclophospho-uridine-RNA + a 5'-end dephospho-ribonucleoside-RNA. It carries out the reaction a 5'-end diphospho-ribonucleoside in mRNA + GTP + H(+) = a 5'-end (5'-triphosphoguanosine)-ribonucleoside in mRNA + diphosphate. The catalysed reaction is a 5'-end (N(7)-methyl 5'-triphosphoguanosine)-ribonucleoside in mRNA + S-adenosyl-L-methionine = a 5'-end (N(7)-methyl 5'-triphosphoguanosine)-(2'-O-methyl-ribonucleoside) in mRNA + S-adenosyl-L-homocysteine + H(+). Multifunctional protein involved in the transcription and replication of viral RNAs. Contains the proteinases responsible for the cleavages of the polyprotein. Its function is as follows. May play a role in the modulation of host cell survival signaling pathway by interacting with host PHB and PHB2. Indeed, these two proteins play a role in maintaining the functional integrity of the mitochondria and protecting cells from various stresses. Functionally, responsible for the cleavages located at the N-terminus of the replicase polyprotein. In addition, PL-PRO possesses a deubiquitinating/deISGylating activity and processes both 'Lys-48'- and 'Lys-63'-linked polyubiquitin chains from cellular substrates. In terms of biological role, plays a role in host membrane rearrangement that leads to creation of cytoplasmic double-membrane vesicles (DMV) necessary for viral replication. Alone is able to induce paired membranes. Coexpression of nsp3 and nsp4 does not result in the formation of DMVs. Responsible for the majority of cleavages as it cleaves the C-terminus of replicase polyprotein at 11 sites. Recognizes substrates containing the core sequence [ILMVF]-Q-|-[SGACN]. Inhibited by the substrate-analog Cbz-Val-Asn-Ser-Thr-Leu-Gln-CMK. Its function is as follows. Forms a hexadecamer with nsp8 (8 subunits of each) that may participate in viral replication by acting as a primase. Alternatively, may synthesize substantially longer products than oligonucleotide primers. Functionally, forms a hexadecamer with nsp7 (8 subunits of each) that may participate in viral replication by acting as a primase. Alternatively, may synthesize substantially longer products than oligonucleotide primers. In terms of biological role, forms a primer, NSP9-pU, which is utilized by the polymerase for the initiation of RNA chains. Interacts with ribosome signal recognition particle RNA (SRP). Together with NSP8, suppress protein integration into the cell membrane, thereby disrupting host immune defenses. Plays a pivotal role in viral transcription by stimulating both nsp14 3'-5' exoribonuclease and nsp16 2'-O-methyltransferase activities. Therefore plays an essential role in viral mRNAs cap methylation. Its function is as follows. RNA-directed RNA polymerase that catalyzes the transcription of viral genomic and subgenomic RNAs. Acts in complex with nsp7 and nsp8 to transcribe both the minus and positive strands of genomic RNA. The kinase-like NiRAN domain of NSP12 attaches one or more nucleotides to the amino terminus of NSP9, forming a covalent RNA-protein intermediate that serves as transcription/replication primer. Subgenomic RNAs (sgRNAs) are formed by discontinuous transcription: The polymerase has the ability to pause at transcription-regulating sequences (TRS) and jump to the leader TRS, resulting in a major deletion. This creates a series of subgenomic RNAs that are replicated, transcribed and translated. In addition, Nsp12 is a subunit of the viral RNA capping enzyme that catalyzes the RNA guanylyltransferase reaction for genomic and sub-genomic RNAs. Subsequently, the NiRAN domain transfers RNA to GDP, and forms the core cap structure GpppA-RNA. Functionally, multi-functional protein with a zinc-binding domain in N-terminus displaying RNA and DNA duplex-unwinding activities with 5' to 3' polarity. Activity of helicase is dependent on magnesium. In terms of biological role, enzyme possessing two different activities: an exoribonuclease activity acting on both ssRNA and dsRNA in a 3' to 5' direction and a N7-guanine methyltransferase activity. Acts as a proofreading exoribonuclease for RNA replication, thereby lowering The sensitivity of the virus to RNA mutagens. Plays a role in viral transcription/replication and prevents the simultaneous activation of host cell dsRNA sensors, such as MDA5/IFIH1, OAS, and PKR. Acts by degrading the 5'-polyuridines generated during replication of the poly(A) region of viral genomic and subgenomic RNAs. Catalyzes a two-step reaction in which a 2'3'-cyclic phosphate (2'3'-cP) is first generated by 2'-O transesterification, which is then hydrolyzed to a 3'-phosphate (3'-P). If not degraded, poly(U) RNA would hybridize with poly(A) RNA tails and activate host dsRNA sensors. Its function is as follows. Methyltransferase that mediates mRNA cap 2'-O-ribose methylation to the 5'-cap structure of viral mRNAs. N7-methyl guanosine cap is a prerequisite for binding of nsp16. Therefore plays an essential role in viral mRNAs cap methylation which is essential to evade immune system. In Gallus gallus (Chicken), this protein is Replicase polyprotein 1ab (rep).